Consider the following 535-residue polypeptide: RNA-splicing ligase RtcB homolog 1 (535 aa).

Residues 1-16 (MAKSRYSRKNKGKKLQ) show a composition bias toward basic residues. Residues 1 to 29 (MAKSRYSRKNKGKKLQRVQENTVSTEEKS) form a disordered region. Mn(2+) contacts are provided by D152, C155, H260, H292, and H383. 259–263 (NHYLE) contributes to the GMP binding site. GMP contacts are provided by residues 383 to 384 (HN), 432 to 435 (GGSM), S439, 458 to 461 (HGAG), and K534. H458 acts as the GMP-histidine intermediate in catalysis.

It belongs to the RtcB family. In terms of assembly, catalytic component of the tRNA-splicing ligase complex. Mn(2+) serves as cofactor.

The catalysed reaction is a 3'-end 3'-phospho-ribonucleotide-RNA + a 5'-end dephospho-ribonucleoside-RNA + GTP = a ribonucleotidyl-ribonucleotide-RNA + GMP + diphosphate. The enzyme catalyses a 3'-end 2',3'-cyclophospho-ribonucleotide-RNA + a 5'-end dephospho-ribonucleoside-RNA + GTP + H2O = a ribonucleotidyl-ribonucleotide-RNA + GMP + diphosphate + H(+). Catalytic subunit of the tRNA-splicing ligase complex that acts by directly joining spliced tRNA halves to mature-sized tRNAs by incorporating the precursor-derived splice junction phosphate into the mature tRNA as a canonical 3',5'-phosphodiester. May act as an RNA ligase with broad substrate specificity, and may function toward other RNAs. This is RNA-splicing ligase RtcB homolog 1 from Entamoeba dispar (strain ATCC PRA-260 / SAW760).